The following is a 441-amino-acid chain: Glutamate-1-semialdehyde 2,1-aminomutase (441 aa).

Lysine 270 bears the N6-(pyridoxal phosphate)lysine mark.

The protein belongs to the class-III pyridoxal-phosphate-dependent aminotransferase family. HemL subfamily. Homodimer. It depends on pyridoxal 5'-phosphate as a cofactor.

It localises to the cytoplasm. The catalysed reaction is (S)-4-amino-5-oxopentanoate = 5-aminolevulinate. It functions in the pathway porphyrin-containing compound metabolism; protoporphyrin-IX biosynthesis; 5-aminolevulinate from L-glutamyl-tRNA(Glu): step 2/2. The chain is Glutamate-1-semialdehyde 2,1-aminomutase (hemL) from Propionibacterium freudenreichii subsp. freudenreichii.